Reading from the N-terminus, the 527-residue chain is Putative BTB/POZ domain-containing protein R225 (527 aa).

In terms of domain architecture, BTB spans 16–89; the sequence is TDLELVLTDP…YGQTNRSTDY (74 aa).

The protein belongs to the mimivirus BTB/WD family.

The chain is Putative BTB/POZ domain-containing protein R225 from Acanthamoeba polyphaga (Amoeba).